Reading from the N-terminus, the 368-residue chain is Phosphate acyltransferase (368 aa).

Belongs to the PlsX family. Homodimer. Probably interacts with PlsY.

Its subcellular location is the cytoplasm. It carries out the reaction a fatty acyl-[ACP] + phosphate = an acyl phosphate + holo-[ACP]. Its pathway is lipid metabolism; phospholipid metabolism. Catalyzes the reversible formation of acyl-phosphate (acyl-PO(4)) from acyl-[acyl-carrier-protein] (acyl-ACP). This enzyme utilizes acyl-ACP as fatty acyl donor, but not acyl-CoA. The sequence is that of Phosphate acyltransferase from Herpetosiphon aurantiacus (strain ATCC 23779 / DSM 785 / 114-95).